Reading from the N-terminus, the 319-residue chain is Taste receptor type 2 member 14 (319 aa).

Topologically, residues 1-7 are extracellular; the sequence is MDGVIKS. The helical transmembrane segment at 8 to 28 threads the bilayer; that stretch reads IFTFILIVEFIIGNLGNSFIV. Residues 29 to 55 lie on the Cytoplasmic side of the membrane; it reads LVNCIDWVKRRKISLVDQILIALAISR. A helical membrane pass occupies residues 56-76; sequence ISLVWSIFGSWCVSVFFPALF. At 77–87 the chain is on the extracellular side; it reads ATEKLLRMLTN. 2 residues coordinate cholesterol: T86 and W89. Residues 88 to 108 form a helical membrane-spanning segment; the sequence is IWTVTNHFSVWLATILGTFYF. Residues 109 to 129 lie on the Cytoplasmic side of the membrane; sequence LKIANFSNSIFLYLKWRVKKV. The chain crosses the membrane as a helical span at residues 130–150; the sequence is VLVLLLVTLGLLFLNILLINI. Residues 151–184 are Extracellular-facing; that stretch reads HINASINGYRGNMTCSSASCNFIRFSRAIALTST. N153 and N162 each carry an N-linked (GlcNAc...) asparagine glycan. Residue A180 participates in cholesterol binding. The helical transmembrane segment at 185–205 threads the bilayer; sequence VFVLIPFTLSLATSLLLSFSL. Residues 206–233 lie on the Cytoplasmic side of the membrane; that stretch reads WKHHKKMQHTVKGYRDVSTKAHRGVMQT. Residues 234 to 254 traverse the membrane as a helical segment; sequence VITFLLLYAVFLLTFFISIWA. Topologically, residues 255-263 are extracellular; it reads SVRLKENQI. Residues 264–284 form a helical membrane-spanning segment; the sequence is IILSEMMGLAYPSGHSCVLIL. Cholesterol is bound by residues S267 and M270. Over 285–319 the chain is Cytoplasmic; the sequence is GNKKLRQASLSVLWWLRYRFKHGEPSGHKEFRESS.

It belongs to the G-protein coupled receptor T2R family. As to quaternary structure, core component of the TAS2R14-GNAI1 complex, consisting of TAS2R14, GNAI1, GNB1 and GNG2; within the complex interacts with GNAI1. Core component of the TAS2R14-GNAT3 complex, consisting of TAS2R14, GNAT3, GNB1 and GNG2; within the complex interacts with GNAT3. Core component of the TAS2R14-GNAS2 complex, consisting of TAS2R14, GNAS2, GNB1 and GNG2; within the complex interacts with GNAS2.

The protein localises to the membrane. It catalyses the reaction Ca(2+)(in) = Ca(2+)(out). It carries out the reaction 3',5'-cyclic AMP(in) = 3',5'-cyclic AMP(out). Basal activity is enhanced by binding to bitter tastants, such as flufenamic acid and aristolochic acid. Regulated by cholesterol in a concentration-dependent manner. Gustducin-linked G-protein coupled receptor that plays a role in the perception of bitterness. The activity of this receptor stimulates GNAT3, activating the gustducin G-protein pathway. Likely plays a role in sensing the chemical composition of the gastrointestinal content and other extra-oral tissues via the inhibitory G-protein pathways. The chain is Taste receptor type 2 member 14 (TAS2R14) from Macaca mulatta (Rhesus macaque).